The primary structure comprises 796 residues: Protein translocase subunit SecA 2 (796 aa).

ATP-binding positions include Q84, G102–T106, and D496.

This sequence belongs to the SecA family. In terms of assembly, monomer and homodimer. Part of the essential Sec protein translocation apparatus which comprises SecA, SecYEG and auxiliary proteins SecDF. Other proteins may also be involved.

The protein localises to the cell membrane. It is found in the cytoplasm. The catalysed reaction is ATP + H2O + cellular proteinSide 1 = ADP + phosphate + cellular proteinSide 2.. Functionally, part of the Sec protein translocase complex. Interacts with the SecYEG preprotein conducting channel. Has a central role in coupling the hydrolysis of ATP to the transfer of proteins into and across the cell membrane, serving as an ATP-driven molecular motor driving the stepwise translocation of polypeptide chains across the membrane. This Staphylococcus aureus (strain MRSA252) protein is Protein translocase subunit SecA 2.